Here is an 86-residue protein sequence, read N- to C-terminus: High affinity immunoglobulin epsilon receptor subunit gamma (86 aa).

Positions 1 to 18 are cleaved as a signal peptide; it reads MIPAVVLLLLLLVEQAAA. Over 19-23 the chain is Extracellular; that stretch reads LGEPQ. The chain crosses the membrane as a helical span at residues 24-44; the sequence is LCYILDAILFLYGIVLTLLYC. The Cytoplasmic portion of the chain corresponds to 45-86; that stretch reads RLKLQVRKAAIDSYEKSDGVYTGLSTRNQETYETLKHEKPPQ. One can recognise an ITAM domain in the interval 54 to 82; sequence AIDSYEKSDGVYTGLSTRNQETYETLKHE. Phosphotyrosine is present on tyrosine 65. At serine 69 the chain carries Phosphoserine. A Phosphotyrosine modification is found at tyrosine 76. At threonine 78 the chain carries Phosphothreonine.

The protein belongs to the CD3Z/FCER1G family. As to quaternary structure, igE Fc receptor is a tetramer of an alpha chain, a beta chain, and two disulfide linked gamma chains. Associates with FCGR1A; forms a functional signaling complex. The signaling subunit of immunoglobulin gamma (IgG) Fc receptor complex. As a homodimer or a heterodimer of CD247 and FCER1G, associates with the ligand binding subunit FCGR3A to form a functional receptor complex. Associates with CLEC6A. Interacts with CLEC4E. Interacts (via ITAM domain) with SYK (via SH2 domains); activates SYK, enabling integrin-mediated activation of neutrophils and macrophages. Interacts with common beta chain of interleukin 3 receptor CSF2RB and recruits SYK in response to IL3 stimulation; this interaction is direct. Interacts with CD300LH; the interaction may be indirect. Interacts with CD300LD. Interacts with TARM1.

It is found in the cell membrane. Functionally, adapter protein containing an immunoreceptor tyrosine-based activation motif (ITAM) that transduces activation signals from various immunoreceptors. As a component of the high-affinity immunoglobulin E (IgE) receptor, mediates allergic inflammatory signaling in mast cells. As a constitutive component of interleukin-3 receptor complex, selectively mediates interleukin 4/IL4 production b basophils priming T-cells toward effector T-helper 2 subset. Associates with pattern recognition receptors CLEC4D and CLEC4E to form a functional signaling complex in myeloid cells. Binding of mycobacterial trehalose 6,6'-dimycolate (TDM) to this receptor complex leads to phosphorylation of ITAM, triggering activation of SYK, CARD9 and NF-kappa-B, consequently driving maturation of antigen-presenting cells and shaping antigen-specific priming of T-cells toward effector T-helper 1 and T-helper 17 cell subtypes. May function cooperatively with other activating receptors. Functionally linked to integrin beta-2/ITGB2-mediated neutrophil activation. Also involved in integrin alpha-2/ITGA2-mediated platelet activation. This is High affinity immunoglobulin epsilon receptor subunit gamma (FCER1G) from Sus scrofa (Pig).